Here is a 130-residue protein sequence, read N- to C-terminus: Small ribosomal subunit protein uS9 (130 aa).

It belongs to the universal ribosomal protein uS9 family.

The sequence is that of Small ribosomal subunit protein uS9 from Idiomarina loihiensis (strain ATCC BAA-735 / DSM 15497 / L2-TR).